A 118-amino-acid polypeptide reads, in one-letter code: Putative pterin-4-alpha-carbinolamine dehydratase (118 aa).

Belongs to the pterin-4-alpha-carbinolamine dehydratase family.

The enzyme catalyses (4aS,6R)-4a-hydroxy-L-erythro-5,6,7,8-tetrahydrobiopterin = (6R)-L-erythro-6,7-dihydrobiopterin + H2O. The sequence is that of Putative pterin-4-alpha-carbinolamine dehydratase from Pseudomonas aeruginosa (strain LESB58).